The following is a 173-amino-acid chain: Crossover junction endodeoxyribonuclease RuvC (173 aa).

Catalysis depends on residues Asp8, Glu67, and Asp139. Mg(2+) contacts are provided by Asp8, Glu67, and Asp139.

This sequence belongs to the RuvC family. As to quaternary structure, homodimer which binds Holliday junction (HJ) DNA. The HJ becomes 2-fold symmetrical on binding to RuvC with unstacked arms; it has a different conformation from HJ DNA in complex with RuvA. In the full resolvosome a probable DNA-RuvA(4)-RuvB(12)-RuvC(2) complex forms which resolves the HJ. Requires Mg(2+) as cofactor.

It localises to the cytoplasm. The catalysed reaction is Endonucleolytic cleavage at a junction such as a reciprocal single-stranded crossover between two homologous DNA duplexes (Holliday junction).. Functionally, the RuvA-RuvB-RuvC complex processes Holliday junction (HJ) DNA during genetic recombination and DNA repair. Endonuclease that resolves HJ intermediates. Cleaves cruciform DNA by making single-stranded nicks across the HJ at symmetrical positions within the homologous arms, yielding a 5'-phosphate and a 3'-hydroxyl group; requires a central core of homology in the junction. The consensus cleavage sequence is 5'-(A/T)TT(C/G)-3'. Cleavage occurs on the 3'-side of the TT dinucleotide at the point of strand exchange. HJ branch migration catalyzed by RuvA-RuvB allows RuvC to scan DNA until it finds its consensus sequence, where it cleaves and resolves the cruciform DNA. This Klebsiella pneumoniae (strain 342) protein is Crossover junction endodeoxyribonuclease RuvC.